The chain runs to 500 residues: Cytochrome P450 71B38 (500 aa).

Residues 3-23 form a helical membrane-spanning segment; the sequence is IFLCFLLLLPLSLILFKKLLP. Cysteine 441 is a binding site for heme.

It belongs to the cytochrome P450 family. It depends on heme as a cofactor.

The protein resides in the membrane. This is Cytochrome P450 71B38 (CYP71B38) from Arabidopsis thaliana (Mouse-ear cress).